The chain runs to 315 residues: Apolipoprotein F (315 aa).

The signal sequence occupies residues 1 to 24 (MHSLRLILMSIQLLCYLLLCPVDA). A propeptide spanning residues 25–154 (TSHGEATSVS…EQPGPKRAKR (130 aa)) is cleaved from the precursor.

Belongs to the apolipoprotein F family. Liver.

The protein resides in the secreted. Functionally, minor apolipoprotein that associates with LDL. Inhibits cholesteryl ester transfer protein (CETP) activity and appears to be an important regulator of cholesterol transport. Also associates to a lesser degree with VLDL, Apo-AI and Apo-AII. The polypeptide is Apolipoprotein F (Apof) (Mus musculus (Mouse)).